The chain runs to 335 residues: Cytoskeleton protein RodZ (335 aa).

Residues 1–111 are Cytoplasmic-facing; sequence MNTEATHDQN…LGKRRKKRDG (111 aa). Residues 19-71 enclose the HTH cro/C1-type domain; sequence LRNAREQLGLSQQAVAERLCLKVSTVRDIEEDKAPADLASTFLRGYIRSYARL. Residues 30-49 constitute a DNA-binding region (H-T-H motif); it reads QQAVAERLCLKVSTVRDIEE. Residues 112–132 traverse the membrane as a helical; Signal-anchor for type II membrane protein segment; it reads WLMTFTWLVLFVVIGLSGAWW. The Periplasmic portion of the chain corresponds to 133–335; sequence WQDHKAQQEE…TLNAEQSPAQ (203 aa). Residues 148-164 are compositionally biased toward polar residues; that stretch reads DQSSAELNNNQSQSVPL. The disordered stretch occupies residues 148–244; sequence DQSSAELNNN…PLPTDQAGVT (97 aa). Composition is skewed to low complexity over residues 165–205 and 217–239; these read DTST…DPQQ and DTAA…LPTD.

It belongs to the RodZ family.

The protein localises to the cell inner membrane. In terms of biological role, cytoskeletal protein that is involved in cell-shape control through regulation of the length of the long axis. In Escherichia coli O6:H1 (strain CFT073 / ATCC 700928 / UPEC), this protein is Cytoskeleton protein RodZ.